An 847-amino-acid polypeptide reads, in one-letter code: B-cell receptor CD22 (847 aa).

The first 19 residues, 1–19 (MHLLGPWLLLLVLEYLAFS), serve as a signal peptide directing secretion. An Ig-like V-type domain is found at 20–138 (DSSKWAFEHP…MERIHLNVSE (119 aa)). At 20–687 (DSSKWAFEHP…YYSPETIGRR (668 aa)) the chain is on the extracellular side. Asn-67, Asn-101, and Asn-112 each carry an N-linked (GlcNAc...) asparagine glycan. Arg-120 serves as a coordination point for N-acetylneuraminate. N-linked (GlcNAc...) asparagine glycosylation is found at Asn-135, Asn-164, and Asn-231. Ig-like C2-type domains lie at 143–235 (PHIQ…DTVQ), 242–326 (PKLE…VFLQ), 331–416 (PEPS…LDVQ), 419–500 (PKKV…VALN), 505–582 (PRDV…QTAS), and 593–676 (PRRL…STLT). A disulfide bridge links Cys-161 with Cys-219. Cystine bridges form between Cys-265–Cys-309 and Cys-353–Cys-396. 5 N-linked (GlcNAc...) asparagine glycosylation sites follow: Asn-363, Asn-428, Asn-445, Asn-448, and Asn-479. 2 cysteine pairs are disulfide-bonded: Cys-442-Cys-484 and Cys-529-Cys-571. 2 N-linked (GlcNAc...) asparagine glycosylation sites follow: Asn-574 and Asn-634. Cys-616 and Cys-659 are oxidised to a cystine. Residues 688-708 (VAVGFGSCLAILILAICGLKL) traverse the membrane as a helical segment. Residues 709-847 (QRRWKRTQSQ…ENVDYVILKH (139 aa)) lie on the Cytoplasmic side of the membrane. A phosphoserine mark is found at Ser-725, Ser-726, and Ser-729. Short sequence motifs (ITIM motif) lie at residues 760–765 (ISYTTL) and 794–799 (VTYSVL). Tyr-762 carries the post-translational modification Phosphotyrosine. 3 positions are modified to phosphotyrosine: Tyr-807, Tyr-822, and Tyr-842. Short sequence motifs (ITIM motif) lie at residues 820–825 (IHYSEL) and 840–845 (VDYVIL).

The protein belongs to the immunoglobulin superfamily. SIGLEC (sialic acid binding Ig-like lectin) family. Predominantly monomer of isoform CD22-beta. Also found as heterodimer of isoform CD22-beta and a shorter isoform. Interacts with PTPN6/SHP-1, LYN, SYK, PIK3R1/PIK3R2 and PLCG1 upon phosphorylation. Interacts with GRB2, INPP5D and SHC1 upon phosphorylation. May form a complex with INPP5D/SHIP, GRB2 and SHC1. Post-translationally, phosphorylation of Tyr-762, Tyr-807 and Tyr-822 are involved in binding to SYK, GRB2 and SYK, respectively. Phosphorylation of Tyr-842 is involved in binding to SYK, PLCG2 and PIK3R1/PIK3R2. Phosphorylated on tyrosine residues by LYN.

It localises to the cell membrane. Its function is as follows. Most highly expressed siglec (sialic acid-binding immunoglobulin-like lectin) on B-cells that plays a role in various aspects of B-cell biology including differentiation, antigen presentation, and trafficking to bone marrow. Binds to alpha 2,6-linked sialic acid residues of surface molecules such as CD22 itself, CD45 and IgM in a cis configuration. Can also bind to ligands on other cells as an adhesion molecule in a trans configuration. Acts as an inhibitory coreceptor on the surface of B-cells and inhibits B-cell receptor induced signaling, characterized by inhibition of the calcium mobilization and cellular activation. Mechanistically, the immunoreceptor tyrosine-based inhibitory motif domain is phosphorylated by the Src kinase LYN, which in turn leads to the recruitment of the protein tyrosine phosphatase 1/PTPN6, leading to the negative regulation of BCR signaling. If this negative signaling from is of sufficient strength, apoptosis of the B-cell can be induced. The protein is B-cell receptor CD22 of Pan troglodytes (Chimpanzee).